The primary structure comprises 851 residues: DNA mismatch repair protein MutS (851 aa).

Residue 602 to 609 coordinates ATP; that stretch reads GPNMSGKS.

This sequence belongs to the DNA mismatch repair MutS family.

In terms of biological role, this protein is involved in the repair of mismatches in DNA. It is possible that it carries out the mismatch recognition step. This protein has a weak ATPase activity. This Streptococcus pyogenes serotype M49 (strain NZ131) protein is DNA mismatch repair protein MutS.